The primary structure comprises 1045 residues: MDAEVEDKTLHTLSKGTEVPMDSLIPELRVPYDCSMAKKRRAEEQASGVPINKRKSLLMKPRHYSPDMGCKESPDNRNEDDGLLETNDHATADEIMVKSMDETLHLPAQDSSLQKKDQYTCYPELMVKSLVHLGKFEESESVQTTCENLNGSSIQSLKAESDEAHEGSMVHSDNGRDKVHHSQPPFCSSGDSESDSDSAENGWGNGSNSSEDTDTHKGPKHKLTYNRKDLLEVPEIKAEDDKFIPCENRCDSDTDGRDPQNSHMEPLVVKAQPSFPEVEEGESLATVTEEPAEVEKAKGNLSLLEQAIALQAERGSVFHHTYKELDRFFLDHLARERRQPRVTDANGRQIFTNKHSPRPERREAKCPIPGCDGTGHVTGLYPHHRSLSGCPHKVRVPLEILAMHENVLKCPTPGCTGRGHVNSNRNTHRSLSGCPIAAAEKLAMTQDKSQLDSSQTGQCPEQAHRVNLVKQIEFNFRSHAITSPRASASKEQEKFGKVPFDYASFDAQVFGKRPLLQTGQGQKAPPFPESKHFSNPVKFPNGLPSAGAHTQSTVRASSYGHGQYSEDTHIAAAAAILNLSTRCREATDILSNKPQSLRAKGAEIEVDENGTLDLSMKKNRIHDKSIPPTSSPTTITTPSSSPFNASSLLVNAAFYQALSDQEGWNVPINYSKSHGKTEEEKEKDPVNFLENLEEKKFAGEASIPSPKPKLHTRDLKKELITCPTPGCDGSGHVTGNYASHRSVSGCPLADKTLKSLMAANSQELKCPTPGCDGSGHVTGNYASHRSLSGCPRARKGGIKMTPTKEEKEDSELRCPVIGCDGQGHISGKYTSHRTASGCPLAAKRQKENPLNGAPLSWKLNKQELPHCPLPGCNGLGHVNNVFVTHRSLSGCPLNAQAIKKVKVSEELMTIKLKATGGIDGDEEIRHLDEEIKELNESNLKIEADMMKLQTQITSMESNLKTIEEENKLIEQSNESLLKELAGLSQALISSLADIQLPQMGPINEQNFEAYVNTLTDMYSNLEQDYSPECKALLESIKQAVKGIHV.

Disordered stretches follow at residues 38 to 90 (KKRR…NDHA), 158 to 228 (KAES…YNRK), and 340 to 364 (PRVT…RREA). The segment covering 52–63 (NKRKSLLMKPRH) has biased composition (basic residues). 2 stretches are compositionally biased toward basic and acidic residues: residues 69 to 90 (GCKE…NDHA) and 159 to 177 (AESD…NGRD). 6 consecutive CCHHC-type zinc fingers follow at residues 357 to 400 (PRPE…PLEI), 401 to 444 (LAMH…KLAM), 713 to 756 (RDLK…LKSL), 757 to 800 (MAAN…GIKM), 805 to 848 (EEKE…QKEN), and 858 to 901 (KLNK…IKKV). Zn(2+) contacts are provided by cysteine 366, cysteine 371, histidine 384, cysteine 390, cysteine 410, cysteine 415, histidine 428, cysteine 434, cysteine 722, cysteine 727, histidine 740, cysteine 746, cysteine 766, cysteine 771, histidine 784, cysteine 790, cysteine 814, cysteine 819, histidine 832, cysteine 838, cysteine 867, cysteine 872, histidine 885, and cysteine 891. Residues 918–987 (IDGDEEIRHL…KELAGLSQAL (70 aa)) adopt a coiled-coil conformation.

The protein belongs to the MYT1 family.

Its subcellular location is the nucleus. Functionally, repressor that binds to DNA sequences containing a bipartite element consisting of a direct repeat of the sequence 5'-AAAGTTT-3' separated by 2-9 nucleotides. Represses basal transcription activity from target promoters. This is Suppression of tumorigenicity 18 protein (St18) from Mus musculus (Mouse).